Reading from the N-terminus, the 335-residue chain is 3-isopropylmalate dehydrogenase (335 aa).

Residues arginine 87, arginine 97, arginine 121, and aspartate 211 each contribute to the substrate site. Positions 211, 235, and 239 each coordinate Mg(2+). Residue 271–283 participates in NAD(+) binding; it reads GSAPDIAGQSKAD.

Belongs to the isocitrate and isopropylmalate dehydrogenases family. LeuB type 2 subfamily. In terms of assembly, homodimer. The cofactor is Mg(2+). Mn(2+) serves as cofactor.

It is found in the cytoplasm. The catalysed reaction is (2R,3S)-3-isopropylmalate + NAD(+) = 4-methyl-2-oxopentanoate + CO2 + NADH. It participates in amino-acid biosynthesis; L-leucine biosynthesis; L-leucine from 3-methyl-2-oxobutanoate: step 3/4. Functionally, catalyzes the oxidation of 3-carboxy-2-hydroxy-4-methylpentanoate (3-isopropylmalate) to 3-carboxy-4-methyl-2-oxopentanoate. The product decarboxylates to 4-methyl-2 oxopentanoate. This Nocardia farcinica (strain IFM 10152) protein is 3-isopropylmalate dehydrogenase.